The chain runs to 314 residues: Secreted frizzled-related protein 5 (314 aa).

The signal sequence occupies residues 1–21 (MWVAWSARTAALALLLGALHG). The FZ domain occupies 45–162 (SKPPQCLDIP…PLDNDLCIAV (118 aa)). 8 cysteine pairs are disulfide-bonded: Cys-50–Cys-113, Cys-60–Cys-106, Cys-97–Cys-132, Cys-121–Cys-159, Cys-125–Cys-149, Cys-178–Cys-250, Cys-181–Cys-252, and Cys-195–Cys-300. The 123-residue stretch at 178–300 (CAQCEMEHSA…AVKFMFSYPC (123 aa)) folds into the NTR domain.

Belongs to the secreted frizzled-related protein (sFRP) family.

Its subcellular location is the secreted. Its function is as follows. Soluble frizzled-related proteins (sFRPS) function as modulators of Wnt signaling through direct interaction with Wnts. They have a role in regulating cell growth and differentiation in specific cell types. SFRP5 may be involved in determining the polarity of photoreceptor, and perhaps, other cells in the retina. The protein is Secreted frizzled-related protein 5 (Sfrp5) of Mus musculus (Mouse).